Reading from the N-terminus, the 828-residue chain is Translation initiation factor IF-2 (828 aa).

Disordered stretches follow at residues 48 to 76 and 112 to 148; these read SYSG…SEEF and ASQE…ESTL. Residues 49–58 are compositionally biased toward polar residues; sequence YSGSTTTLSL. Residues 65 to 74 show a composition bias toward low complexity; the sequence is LETGSSSGSE. Over residues 116–126 the composition is skewed to acidic residues; it reads DPIEVEQEESS. Residues 127–144 are compositionally biased toward basic and acidic residues; sequence DTNKVKEEPKIEEVKDIE. Residues 326–496 form the tr-type G domain; that stretch reads SRAPVVTVMG…LLIAEMQNLK (171 aa). The G1 stretch occupies residues 335–342; sequence GHVDHGKT. 335 to 342 contacts GTP; the sequence is GHVDHGKT. Residues 360 to 364 form a G2 region; sequence GITQH. The G3 stretch occupies residues 382 to 385; that stretch reads DTPG. Residues 382-386 and 436-439 each bind GTP; these read DTPGH and NKID. The interval 436 to 439 is G4; it reads NKID. The interval 472 to 474 is G5; the sequence is SAL.

Belongs to the TRAFAC class translation factor GTPase superfamily. Classic translation factor GTPase family. IF-2 subfamily.

The protein resides in the cytoplasm. Functionally, one of the essential components for the initiation of protein synthesis. Protects formylmethionyl-tRNA from spontaneous hydrolysis and promotes its binding to the 30S ribosomal subunits. Also involved in the hydrolysis of GTP during the formation of the 70S ribosomal complex. In Rickettsia bellii (strain OSU 85-389), this protein is Translation initiation factor IF-2.